The following is a 248-amino-acid chain: Triosephosphate isomerase (248 aa).

Substrate contacts are provided by N12 and K14. At K14 the chain carries N6-acetyllysine. 3'-nitrotyrosine is present on Y68. H96 acts as the Electrophile in catalysis. The residue at position 106 (S106) is a Phosphoserine. K142 is covalently cross-linked (Glycyl lysine isopeptide (Lys-Gly) (interchain with G-Cter in SUMO1)). An N6-succinyllysine modification is found at K149. K156 is modified (N6-acetyllysine; alternate). K156 bears the N6-succinyllysine; alternate mark. The Proton acceptor role is filled by E166. At T173 the chain carries Phosphothreonine. K194 carries the N6-acetyllysine; alternate modification. K194 carries the post-translational modification N6-succinyllysine; alternate. The residue at position 194 (K194) is an N6-methyllysine; alternate. Y209 carries the post-translational modification 3'-nitrotyrosine. S212 carries the phosphoserine modification. T214 is subject to Phosphothreonine. Position 223 is a phosphoserine (S223). K238 is subject to N6-acetyllysine.

Belongs to the triosephosphate isomerase family. As to quaternary structure, homodimer.

The protein localises to the cytoplasm. The catalysed reaction is dihydroxyacetone phosphate = methylglyoxal + phosphate. It catalyses the reaction D-glyceraldehyde 3-phosphate = dihydroxyacetone phosphate. Its pathway is carbohydrate degradation; glycolysis; D-glyceraldehyde 3-phosphate from glycerone phosphate: step 1/1. It participates in carbohydrate biosynthesis; gluconeogenesis. Its function is as follows. Triosephosphate isomerase is an extremely efficient metabolic enzyme that catalyzes the interconversion between dihydroxyacetone phosphate (DHAP) and D-glyceraldehyde-3-phosphate (G3P) in glycolysis and gluconeogenesis. In terms of biological role, it is also responsible for the non-negligible production of methylglyoxal a reactive cytotoxic side-product that modifies and can alter proteins, DNA and lipids. The polypeptide is Triosephosphate isomerase (TPI1) (Sus scrofa (Pig)).